We begin with the raw amino-acid sequence, 300 residues long: Haloalkane dehalogenase (300 aa).

In terms of domain architecture, AB hydrolase-1 spans 32–155; that stretch reads AIVFQHGNPT…PAVRGVFQGF (124 aa). Asp109 (nucleophile) is an active-site residue. Glu133 functions as the Proton donor in the catalytic mechanism. Catalysis depends on His273, which acts as the Proton acceptor.

The protein belongs to the haloalkane dehalogenase family. Type 2 subfamily. As to quaternary structure, monomer.

It catalyses the reaction 1-haloalkane + H2O = a halide anion + a primary alcohol + H(+). Its function is as follows. Catalyzes hydrolytic cleavage of carbon-halogen bonds in halogenated aliphatic compounds, leading to the formation of the corresponding primary alcohols, halide ions and protons. This chain is Haloalkane dehalogenase, found in Mycobacterium bovis (strain ATCC BAA-935 / AF2122/97).